The sequence spans 144 residues: UPF0102 protein sce2912 (144 aa).

Belongs to the UPF0102 family.

The sequence is that of UPF0102 protein sce2912 from Sorangium cellulosum (strain So ce56) (Polyangium cellulosum (strain So ce56)).